Reading from the N-terminus, the 220-residue chain is Putative NAD(P)H nitroreductase SERP2086 (220 aa).

The protein belongs to the nitroreductase family. FMN is required as a cofactor.

The protein is Putative NAD(P)H nitroreductase SERP2086 of Staphylococcus epidermidis (strain ATCC 35984 / DSM 28319 / BCRC 17069 / CCUG 31568 / BM 3577 / RP62A).